We begin with the raw amino-acid sequence, 92 residues long: Phosphoribosyl-ATP pyrophosphatase (92 aa).

This sequence belongs to the PRA-PH family.

The protein localises to the cytoplasm. It catalyses the reaction 1-(5-phospho-beta-D-ribosyl)-ATP + H2O = 1-(5-phospho-beta-D-ribosyl)-5'-AMP + diphosphate + H(+). The protein operates within amino-acid biosynthesis; L-histidine biosynthesis; L-histidine from 5-phospho-alpha-D-ribose 1-diphosphate: step 2/9. This Leptospira interrogans serogroup Icterohaemorrhagiae serovar copenhageni (strain Fiocruz L1-130) protein is Phosphoribosyl-ATP pyrophosphatase.